The following is a 331-amino-acid chain: tRNA N6-adenosine threonylcarbamoyltransferase (331 aa).

2 residues coordinate Fe cation: His-108 and His-112. Substrate-binding positions include 129 to 133, Asp-161, Glu-178, and Ser-258; that span reads LVSGG. Asp-286 lines the Fe cation pocket.

The protein belongs to the KAE1 / TsaD family. The cofactor is Fe(2+).

The protein resides in the cytoplasm. It catalyses the reaction L-threonylcarbamoyladenylate + adenosine(37) in tRNA = N(6)-L-threonylcarbamoyladenosine(37) in tRNA + AMP + H(+). Its function is as follows. Required for the formation of a threonylcarbamoyl group on adenosine at position 37 (t(6)A37) in tRNAs that read codons beginning with adenine. Is probably involved in the transfer of the threonylcarbamoyl moiety of threonylcarbamoyl-AMP (TC-AMP) to the N6 group of A37. The chain is tRNA N6-adenosine threonylcarbamoyltransferase from Caldivirga maquilingensis (strain ATCC 700844 / DSM 13496 / JCM 10307 / IC-167).